A 231-amino-acid chain; its full sequence is 2,3-bisphosphoglycerate-dependent phosphoglycerate mutase (231 aa).

Substrate is bound by residues 10 to 17 (RHGQSEWN), 23 to 24 (TG), Arg-62, 89 to 92 (ERHY), Lys-100, 116 to 117 (RR), and 185 to 186 (GN). His-11 serves as the catalytic Tele-phosphohistidine intermediate. The Proton donor/acceptor role is filled by Glu-89.

This sequence belongs to the phosphoglycerate mutase family. BPG-dependent PGAM subfamily. As to quaternary structure, homodimer.

It carries out the reaction (2R)-2-phosphoglycerate = (2R)-3-phosphoglycerate. It participates in carbohydrate degradation; glycolysis; pyruvate from D-glyceraldehyde 3-phosphate: step 3/5. Its function is as follows. Catalyzes the interconversion of 2-phosphoglycerate and 3-phosphoglycerate. The sequence is that of 2,3-bisphosphoglycerate-dependent phosphoglycerate mutase from Buchnera aphidicola subsp. Acyrthosiphon pisum (strain 5A).